A 314-amino-acid polypeptide reads, in one-letter code: MGAGDKTAAGMPRIGMGTAVQGPKADPIRRAVLRAIQIGYRHFDTAAHYETEAPIGEAAAEAVRSGAVASRDELFITSKLWCSDAHRDRVVPALRQTLRNLQMEYVDLYLVHWPVSMKPGRFKAPFTAEDFVPFDMRAVWEAMEECHRLGLAKAIGVANFSCKKLETLLSFATIPPTVNQVEVNPVWQQRKLREFCRGKGIQLCAYSPLGAKGTHWGSDAVMDAGVLQEIAASRGKSVAQVCLRWVYEQGDCLIVKSFDEARMRENLDVDGWELTEEERRRIAEIPQRKINLGKRYVSEHGPYKSLEELWDGEI.

The segment at 1-22 (MGAGDKTAAGMPRIGMGTAVQG) is disordered. Asp-44 provides a ligand contact to NADP(+). The active-site Proton donor is Tyr-49. His-112 provides a ligand contact to substrate. NADP(+) contacts are provided by residues 158–159 (AN), Gln-180, 258–266 (FDEARMREN), and 273–281 (ELTEEERRR).

This sequence belongs to the aldo/keto reductase family. Mostly expressed in root tissues, observed in mesocotyl and embryonic roots, seedling roots, crown and seedling leafes, mature bracts, anthers, pistil, caryopsis and embryos.

The enzyme catalyses 2'-deoxymugineate + NAD(+) = 3''-deamino-3''-oxonicotianamine + NADH + H(+). It catalyses the reaction 2'-deoxymugineate + NADP(+) = 3''-deamino-3''-oxonicotianamine + NADPH + H(+). It participates in siderophore biosynthesis. Functionally, catalyzes the reduction of a 3''-keto intermediate during the biosynthesis of 2'-deoxymugineic acid (DMA) from L-Met. Involved in the formation of phytosiderophores (MAs) belonging to the mugineic acid family and required to acquire iron. The sequence is that of Deoxymugineic acid synthase 1-B from Triticum aestivum (Wheat).